Reading from the N-terminus, the 334-residue chain is Ferrochelatase (334 aa).

Positions 207 and 288 each coordinate Fe cation.

Belongs to the ferrochelatase family.

Its subcellular location is the cytoplasm. It catalyses the reaction heme b + 2 H(+) = protoporphyrin IX + Fe(2+). Its pathway is porphyrin-containing compound metabolism; protoheme biosynthesis; protoheme from protoporphyrin-IX: step 1/1. In terms of biological role, catalyzes the ferrous insertion into protoporphyrin IX. This Helicobacter pylori (strain P12) protein is Ferrochelatase.